A 168-amino-acid chain; its full sequence is Ribosome maturation factor RimM (168 aa).

Residues 96–168 (KDEYYWGDLV…RIRVAWQKDW (73 aa)) form the PRC barrel domain.

This sequence belongs to the RimM family. In terms of assembly, binds ribosomal protein uS19.

It localises to the cytoplasm. In terms of biological role, an accessory protein needed during the final step in the assembly of 30S ribosomal subunit, possibly for assembly of the head region. Essential for efficient processing of 16S rRNA. May be needed both before and after RbfA during the maturation of 16S rRNA. It has affinity for free ribosomal 30S subunits but not for 70S ribosomes. The sequence is that of Ribosome maturation factor RimM from Azoarcus sp. (strain BH72).